Reading from the N-terminus, the 299-residue chain is Very long chain fatty acid elongase 5 (299 aa).

At M1 the chain carries N-acetylmethionine. 7 helical membrane-spanning segments follow: residues 26-46, 64-84, 112-132, 139-158, 168-187, 205-225, and 227-247; these read WFLLDNYIPTFVCSVIYLLIV, ILQLYNLGLTLLSLYMFYELV, VLWWYYFSKLIEFMDTFFFIL, ITVLHVYHHATMLNIWWFVM, FGATLNSFIHVLMYSYYGLS, GQLVQFVLTIIQTTCGVFWPC, and FPLGWLFFQIGYMISLIALFT. The tract at residues 274–299 is disordered; it reads VAAVNGHTNSFPSLENSVKPRKQRKD. The span at 279–289 shows a compositional bias: polar residues; that stretch reads GHTNSFPSLEN.

It belongs to the ELO family. ELOVL5 subfamily. Interacts with TECR.

The protein localises to the endoplasmic reticulum membrane. It is found in the cell projection. It localises to the dendrite. It carries out the reaction a very-long-chain acyl-CoA + malonyl-CoA + H(+) = a very-long-chain 3-oxoacyl-CoA + CO2 + CoA. It catalyses the reaction (6Z,9Z,12Z)-octadecatrienoyl-CoA + malonyl-CoA + H(+) = (8Z,11Z,14Z)-3-oxoeicosatrienoyl-CoA + CO2 + CoA. The enzyme catalyses (9Z,12Z,15Z)-octadecatrienoyl-CoA + malonyl-CoA + H(+) = (11Z,14Z,17Z)-3-oxoeicosatrienoyl-CoA + CO2 + CoA. The catalysed reaction is (9Z)-hexadecenoyl-CoA + malonyl-CoA + H(+) = 3-oxo-(11Z)-octadecenoyl-CoA + CO2 + CoA. It carries out the reaction (9Z)-octadecenoyl-CoA + malonyl-CoA + H(+) = 3-oxo-(11Z)-eicosenoyl-CoA + CO2 + CoA. It catalyses the reaction (11Z)-octadecenoyl-CoA + malonyl-CoA + H(+) = 3-oxo-(13Z)-eicosenoyl-CoA + CO2 + CoA. The enzyme catalyses (9Z,12Z)-octadecadienoyl-CoA + malonyl-CoA + H(+) = (11Z,14Z)-3-oxoicosa-11,14-dienoyl-CoA + CO2 + CoA. The catalysed reaction is (6Z,9Z,12Z,15Z)-octadecatetraenoyl-CoA + malonyl-CoA + H(+) = (8Z,11Z,14Z,17Z)-3-oxoicosatetraenoyl-CoA + CO2 + CoA. It carries out the reaction (5Z,8Z,11Z,14Z)-eicosatetraenoyl-CoA + malonyl-CoA + H(+) = (7Z,10Z,13Z,16Z)-3-oxodocosatetraenoyl-CoA + CO2 + CoA. It catalyses the reaction (5Z,8Z,11Z,14Z,17Z)-eicosapentaenoyl-CoA + malonyl-CoA + H(+) = 3-oxo-(7Z,10Z,13Z,16Z,19Z)-docosapentaenoyl-CoA + CO2 + CoA. Its pathway is lipid metabolism; polyunsaturated fatty acid biosynthesis. Catalyzes the first and rate-limiting reaction of the four reactions that constitute the long-chain fatty acids elongation cycle. This endoplasmic reticulum-bound enzymatic process allows the addition of 2 carbons to the chain of long- and very long-chain fatty acids (VLCFAs) per cycle. Condensing enzyme that acts specifically toward polyunsaturated acyl-CoA with the higher activity toward C18:3(n-6) acyl-CoA. May participate in the production of monounsaturated and of polyunsaturated VLCFAs of different chain lengths that are involved in multiple biological processes as precursors of membrane lipids and lipid mediators. In conditions where the essential linoleic and alpha linoleic fatty acids are lacking it is also involved in the synthesis of Mead acid from oleic acid. The polypeptide is Very long chain fatty acid elongase 5 (Mus musculus (Mouse)).